The following is a 1100-amino-acid chain: DNA repair protein RAD1 (1100 aa).

A disordered region spans residues 1-47 (MSQLFYQGDSDDELQEELTRQTTQASQSSKIKNEDEPDDSNHLNEVE). Residues 20–30 (RQTTQASQSSK) show a composition bias toward polar residues. Over residues 31-47 (IKNEDEPDDSNHLNEVE) the composition is skewed to basic and acidic residues. Ser613 is modified (phosphoserine). The region spanning 821–901 (VVIVDTREFN…YPTLLIEFDE (81 aa)) is the ERCC4 domain. The interval 1063–1100 (EKEEQEQESTDENLESPGKTTDDNALHDHHNDVPEAPV) is disordered. Residues 1065 to 1076 (EEQEQESTDENL) are compositionally biased toward acidic residues. Ser1071 is modified (phosphoserine). Phosphothreonine is present on Thr1072. The segment covering 1082–1100 (TTDDNALHDHHNDVPEAPV) has biased composition (basic and acidic residues).

Belongs to the XPF family. Component of the nucleotide excision repair factor 1 (NEF1) complex consisting of RAD1, RAD10 and RAD14. Interacts with SAW1.

It localises to the nucleus. Functionally, involved in nucleotide excision repair of DNA damaged with UV light, bulky adducts, or cross-linking agents. Along with RAD10 forms an endonuclease that specifically degrades single-stranded DNA. The protein is DNA repair protein RAD1 (RAD1) of Saccharomyces cerevisiae (strain ATCC 204508 / S288c) (Baker's yeast).